Consider the following 212-residue polypeptide: Ras-like protein (212 aa).

15 to 22 (GGGGVGKS) contributes to the GTP binding site. The Effector region motif lies at 37–45 (YDPTIEDSY). Residues 62–66 (DTAGQ) and 121–124 (NKCD) contribute to the GTP site. S-palmitoyl cysteine attachment occurs at residues Cys-205 and Cys-206. Residue Cys-209 is modified to Cysteine methyl ester. Cys-209 carries the S-geranylgeranyl cysteine lipid modification. Positions 210-212 (IVM) are cleaved as a propeptide — removed in mature form.

It belongs to the small GTPase superfamily. Ras family.

It localises to the cell membrane. The enzyme catalyses GTP + H2O = GDP + phosphate + H(+). Its activity is regulated as follows. Alternates between an inactive form bound to GDP and an active form bound to GTP. Activated by a guanine nucleotide-exchange factor (GEF) and inactivated by a GTPase-activating protein (GAP). This Emericella nidulans (strain FGSC A4 / ATCC 38163 / CBS 112.46 / NRRL 194 / M139) (Aspergillus nidulans) protein is Ras-like protein (rasA).